The sequence spans 81 residues: MTTETPVEEMSFETAMQELERVVDQLERGDVALDASISLYERGAALKKRCEDELKRAEEKVAAITLDANGQPTGTQPLDAG.

This sequence belongs to the XseB family. Heterooligomer composed of large and small subunits.

Its subcellular location is the cytoplasm. The catalysed reaction is Exonucleolytic cleavage in either 5'- to 3'- or 3'- to 5'-direction to yield nucleoside 5'-phosphates.. Its function is as follows. Bidirectionally degrades single-stranded DNA into large acid-insoluble oligonucleotides, which are then degraded further into small acid-soluble oligonucleotides. The sequence is that of Exodeoxyribonuclease 7 small subunit from Ruegeria sp. (strain TM1040) (Silicibacter sp.).